Here is a 148-residue protein sequence, read N- to C-terminus: D-aminoacyl-tRNA deacylase (148 aa).

The Gly-cisPro motif, important for rejection of L-amino acids motif lies at 136–137; it reads GP.

This sequence belongs to the DTD family. In terms of assembly, homodimer.

The protein localises to the cytoplasm. The catalysed reaction is glycyl-tRNA(Ala) + H2O = tRNA(Ala) + glycine + H(+). It carries out the reaction a D-aminoacyl-tRNA + H2O = a tRNA + a D-alpha-amino acid + H(+). Its function is as follows. An aminoacyl-tRNA editing enzyme that deacylates mischarged D-aminoacyl-tRNAs. Also deacylates mischarged glycyl-tRNA(Ala), protecting cells against glycine mischarging by AlaRS. Acts via tRNA-based rather than protein-based catalysis; rejects L-amino acids rather than detecting D-amino acids in the active site. By recycling D-aminoacyl-tRNA to D-amino acids and free tRNA molecules, this enzyme counteracts the toxicity associated with the formation of D-aminoacyl-tRNA entities in vivo and helps enforce protein L-homochirality. This is D-aminoacyl-tRNA deacylase from Kosmotoga olearia (strain ATCC BAA-1733 / DSM 21960 / TBF 19.5.1).